We begin with the raw amino-acid sequence, 394 residues long: Envelope glycoprotein D (394 aa).

The signal sequence occupies residues 1-25 (MGGAAARLGAVILFVVIVGLHGVRG). An interaction with TNFRSF14 region spans residues 26–57 (KYALADASLKMADPNRFRGKDLPVLDQLTDPP). Residues 26-340 (KYALADASLK…YHPPATPNNM (315 aa)) are Virion surface-facing. His64 contributes to the Zn(2+) binding site. Disulfide bonds link Cys91-Cys214, Cys131-Cys227, and Cys143-Cys152. N-linked (GlcNAc...) asparagine; by host glycosylation is found at Asn119 and Asn146. Asp240 lines the Zn(2+) pocket. Positions 261–305 (LKIAGWHGPKAPYTSTLLPPELSETPNATQPELAPEDPEDSALLE) are profusion. The segment at 275–301 (STLLPPELSETPNATQPELAPEDPEDS) is disordered. Asn287 carries N-linked (GlcNAc...) asparagine; by host glycosylation. Residues 341–361 (GLIAGAVGGSLLAALVICGIV) traverse the membrane as a helical segment. The Intravirion portion of the chain corresponds to 362 to 394 (YWMHRRTRKAPKRIRLPHIREDDQPSSHQPLFY).

The protein belongs to the herpesviridae glycoprotein D family. Homodimer. Interacts with host receptor TNFRSF14. Interacts with host receptor NECTIN1. Mutant Rid1 interacts with host receptor NECTIN2. Interacts (via profusion domain) with gB; this interaction occurs in the absence of gH/gL. Interacts (via profusion domain) with gH/gL heterodimer; this interaction occurs in the absence of gB. Associates with the gB-gH/gL-gD complex. Interacts (via C-terminus) with UL11 tegument protein. Interacts (via C-terminus) with VP22 tegument protein; this interaction might be very weak. Interacts with host RSAD2.

Its subcellular location is the virion membrane. It localises to the host Golgi apparatus. Envelope glycoprotein that binds to the host cell entry receptors NECTIN1, TNFRSF14/HVEM and 3-O-sulfated heparan sulfate, promoting the virus entry into host cells. May trigger fusion with host membrane, by recruiting the fusion machinery composed of gB and gH/gL. The chain is Envelope glycoprotein D (gD) from Human herpesvirus 1 (strain KOS) (HHV-1).